The sequence spans 504 residues: Cytochrome P450 monooxygenase gliF (504 aa).

The chain crosses the membrane as a helical span at residues 13–31; it reads AVAVSFGVGLLYWVYRLLL. 2 N-linked (GlcNAc...) asparagine glycosylation sites follow: N197 and N299. C449 is a heme binding site.

Belongs to the cytochrome P450 family. The cofactor is heme.

The protein resides in the membrane. Its pathway is mycotoxin biosynthesis. Functionally, cytochrome P450 monooxygenase; part of the gene cluster that mediates the biosynthesis of gliotoxin, a member of the epipolythiodioxopiperazine (ETP) class of toxins characterized by a disulfide bridged cyclic dipeptide. The first step in gliotoxin biosynthesis is the condensation of serine and phenylalanine to form the cyclo-L-phenylalanyl-L-serine diketopiperazine (DKP) by the NRPS gliP. GliP is also able to produce the DKP cyclo-L-tryptophanyl-L-serine, suggesting that the substrate specificity of the first adenylation (A) domain in gliP is sufficiently relaxed to accommodate both L-Phe and L-Trp. The cytochrome P450 monooxygenase gliC has been shown to catalyze the subsequent hydroxylation of the alpha-carbon of L-Phe in cyclo-L-phenylalanyl-L-serine whereas the second cytochrome P450 enzyme, gliF, is presumably involved in the modification of the DKP side chain. The glutathione S-transferase (GST) gliG then forms a bis-glutathionylated biosynthetic intermediate which is responsible for the sulfurization of gliotoxin. This bis-glutathionylated intermediate is subsequently processed by the gamma-glutamyl cyclotransferase gliK to remove both gamma-glutamyl moieties. Subsequent processing via gliI yields a biosynthetic intermediate, which is N-methylated via the N-methyltransferase gliN, before the gliotoxin oxidoreductase gliT-mediated disulfide bridge closure. GliN-mediated amide methylation confers stability to ETP, damping the spontaneous formation of tri- and tetrasulfides. Intracellular dithiol gliotoxin oxidized by gliT is subsequently effluxed by gliA. Gliotoxin contributes to pathogenesis during invasive aspergillosis. In macrophages and neutrophils, gliotoxin showed inhibition of various different cell functions including cytokine production, antigen presentation, phagocytosis, and production of reactive oxygen species. This chain is Cytochrome P450 monooxygenase gliF, found in Aspergillus fumigatus (strain ATCC MYA-4609 / CBS 101355 / FGSC A1100 / Af293) (Neosartorya fumigata).